The chain runs to 146 residues: MKLHELQPAPGSRKERNRVGRGIGSGNGKTSGKGHKGQNARSGGGVRIGFEGGQTPLFRRLPKRGFTNIHRKEYAIVNLEALNRFEDGTEVTPELLLETGVVSKLKAGIKVLGDGELTKKLTVKAHKFSASAKEAIEAAGGTTEVI.

Residues 1 to 51 form a disordered region; sequence MKLHELQPAPGSRKERNRVGRGIGSGNGKTSGKGHKGQNARSGGGVRIGFE. Gly residues-rich tracts occupy residues 21-31 and 42-51; these read RGIGSGNGKTS and SGGGVRIGFE.

It belongs to the universal ribosomal protein uL15 family. Part of the 50S ribosomal subunit.

In terms of biological role, binds to the 23S rRNA. This is Large ribosomal subunit protein uL15 from Anoxybacillus flavithermus (strain DSM 21510 / WK1).